A 466-amino-acid chain; its full sequence is Cysteine--tRNA ligase (466 aa).

C30 serves as a coordination point for Zn(2+). Positions P32 to N42 match the 'HIGH' region motif. Residues C210, H235, and E239 each coordinate Zn(2+). The 'KMSKS' region motif lies at K267 to S271. K270 contributes to the ATP binding site. At S271 the chain carries Phosphoserine.

The protein belongs to the class-I aminoacyl-tRNA synthetase family. As to quaternary structure, monomer. The cofactor is Zn(2+).

The protein resides in the cytoplasm. The enzyme catalyses tRNA(Cys) + L-cysteine + ATP = L-cysteinyl-tRNA(Cys) + AMP + diphosphate. In Geobacillus sp. (strain WCH70), this protein is Cysteine--tRNA ligase.